The following is a 185-amino-acid chain: MAAQKDQQKDAEAEGLSGTTLLPKLIPSGAGREWLERRRATIRPWSTFVDQQRFSRPRNLGELCQRLVRNVEYYQSNYVFVFLGLILYCVVTSPMLLVALAVFFGACYILYLRTLESKLVLFGREVSPAHQYALAGGISFPFFWLAGAGSAVFWVLGATLVVIGSHAAFHQIEAVDGEELQMEPV.

The Cytoplasmic segment spans residues 1-78 (MAAQKDQQKD…RNVEYYQSNY (78 aa)). A required for interaction with prenylated RAB3A and VAMP2 region spans residues 30 to 54 (AGREWLERRRATIRPWSTFVDQQRF). The next 2 membrane-spanning stretches (helical) occupy residues 79-94 (VFVF…VTSP) and 95-112 (MLLV…ILYL). At 113–131 (RTLESKLVLFGREVSPAHQ) the chain is on the cytoplasmic side. The next 2 membrane-spanning stretches (helical) occupy residues 132–148 (YALA…LAGA) and 149–165 (GSAV…VIGS). The interval 165 to 185 (SHAAFHQIEAVDGEELQMEPV) is required for interaction with GDI1. Topologically, residues 166-185 (HAAFHQIEAVDGEELQMEPV) are cytoplasmic. The segment at 175 to 185 (VDGEELQMEPV) is required for interaction with prenylated RAB3A and VAMP2. The homodimerization stretch occupies residues 175 to 185 (VDGEELQMEPV).

This sequence belongs to the PRA1 family. Homodimer. Interacts with VAMP2 (synaptobrevin-2), GDI1, and PCLO. Interacts specifically with prenylated Rab proteins; strongly with RAB4B, RAB5A and RAB5C, and weakly with RAB4A, RAB6, RAB7A, RAB17 and RAB22. Interacts with NDRG1. In terms of tissue distribution, ubiquitous. Strongest expression found in placenta, pituitary gland, kidney, lung and stomach.

It is found in the cell membrane. Its subcellular location is the cytoplasm. It localises to the golgi apparatus. The protein localises to the cytoplasmic vesicle. The protein resides in the secretory vesicle. It is found in the synaptic vesicle. In terms of biological role, general Rab protein regulator required for vesicle formation from the Golgi complex. May control vesicle docking and fusion by mediating the action of Rab GTPases to the SNARE complexes. In addition it inhibits the removal of Rab GTPases from the membrane by GDI. In Homo sapiens (Human), this protein is Prenylated Rab acceptor protein 1 (RABAC1).